The chain runs to 248 residues: Coenzyme F420:L-glutamate ligase (248 aa).

Residues 15–18 (IPLI), 45–46 (ET), and K50 contribute to the GTP site. D115 contacts a divalent metal cation. GTP is bound at residue N118. The a divalent metal cation site is built by D155, S156, and Q213. 211-218 (MGQSDEGI) contacts GTP.

Belongs to the CofE family. Homodimer. The cofactor is Mg(2+). Mn(2+) serves as cofactor. It depends on K(+) as a cofactor.

The catalysed reaction is oxidized coenzyme F420-0 + GTP + L-glutamate = oxidized coenzyme F420-1 + GDP + phosphate + H(+). It catalyses the reaction oxidized coenzyme F420-1 + GTP + L-glutamate = oxidized coenzyme F420-2 + GDP + phosphate + H(+). Its pathway is cofactor biosynthesis; coenzyme F420 biosynthesis. Functionally, catalyzes the GTP-dependent successive addition of two or more gamma-linked L-glutamates to the L-lactyl phosphodiester of 7,8-didemethyl-8-hydroxy-5-deazariboflavin (F420-0) to form coenzyme F420-0-glutamyl-glutamate (F420-2) or polyglutamated F420 derivatives. The chain is Coenzyme F420:L-glutamate ligase from Methanococcus maripaludis (strain C6 / ATCC BAA-1332).